The sequence spans 237 residues: Class B acid phosphatase (237 aa).

A signal peptide spans 1–23 (MKKITLALSAVCLLFTLNHSANA). Catalysis depends on D69, which acts as the Nucleophile. Positions 69 and 71 each coordinate Mg(2+). Catalysis depends on D71, which acts as the Proton donor. Substrate contacts are provided by residues 137 to 138 (TG) and K177. D192 contacts Mg(2+).

Belongs to the class B bacterial acid phosphatase family. In terms of assembly, homotetramer. It depends on Mg(2+) as a cofactor.

It localises to the periplasm. It catalyses the reaction a phosphate monoester + H2O = an alcohol + phosphate. Dephosphorylates several organic phosphate monoesters including monophosphate nucleotides (NMPs), coenzyme A (CoA), nicotinamide adenine dinucleotide phosphate (NADP), flavin mononucleotide (FMN) and phosphorylated 5-6 carbon sugars in vitro. Also has a phosphotransferase activity catalyzing the transfer of low-energy phosphate groups from organic phosphate monoesters to free hydroxyl groups of various organic compounds. In Salmonella typhi, this protein is Class B acid phosphatase (aphA).